A 337-amino-acid chain; its full sequence is Glycerol-3-phosphate dehydrogenase [NAD(P)+] (337 aa).

Tryptophan 11, arginine 30, and lysine 102 together coordinate NADPH. 3 residues coordinate sn-glycerol 3-phosphate: lysine 102, glycine 138, and serine 140. Position 142 (alanine 142) interacts with NADPH. Sn-glycerol 3-phosphate-binding residues include lysine 193, aspartate 246, serine 256, arginine 257, and asparagine 258. The active-site Proton acceptor is lysine 193. Position 257 (arginine 257) interacts with NADPH. NADPH-binding residues include valine 281 and glutamate 283.

It belongs to the NAD-dependent glycerol-3-phosphate dehydrogenase family.

The protein localises to the cytoplasm. It carries out the reaction sn-glycerol 3-phosphate + NAD(+) = dihydroxyacetone phosphate + NADH + H(+). It catalyses the reaction sn-glycerol 3-phosphate + NADP(+) = dihydroxyacetone phosphate + NADPH + H(+). It functions in the pathway membrane lipid metabolism; glycerophospholipid metabolism. Catalyzes the reduction of the glycolytic intermediate dihydroxyacetone phosphate (DHAP) to sn-glycerol 3-phosphate (G3P), the key precursor for phospholipid synthesis. The chain is Glycerol-3-phosphate dehydrogenase [NAD(P)+] from Variovorax paradoxus (strain S110).